A 71-amino-acid chain; its full sequence is Phosphatidylinositol N-acetylglucosaminyltransferase subunit Y (71 aa).

Residues 1-3 (MFL) are Cytoplasmic-facing. Residues 4 to 26 (SLPTLTVLIPLVSLAGLFYSASV) traverse the membrane as a helical segment. Over 27–44 (EENFPQGCTSTASLCFYS) the chain is Lumenal. A helical membrane pass occupies residues 45–65 (LLLPITIPVYVFFHLWTWMGI). The Cytoplasmic segment spans residues 66-71 (KLFRHN).

In terms of assembly, component of the glycosylphosphatidylinositol-N-acetylglucosaminyltransferase (GPI-GnT) complex composed at least by PIGA, PIGC, PIGH, PIGP, PIGQ, PIGY and DPM2. Interacts directly with PIGA; this interaction regulates glycosylphosphatidylinositol-N-acetylglucosaminyltransferase activity. Does not interact with Ras proteins.

The protein resides in the endoplasmic reticulum membrane. It functions in the pathway glycolipid biosynthesis; glycosylphosphatidylinositol-anchor biosynthesis. Functionally, part of the glycosylphosphatidylinositol-N-acetylglucosaminyltransferase (GPI-GnT) complex that catalyzes the transfer of N-acetylglucosamine from UDP-N-acetylglucosamine to phosphatidylinositol and participates in the first step of GPI biosynthesis. May act by regulating the catalytic subunit PIGA. The sequence is that of Phosphatidylinositol N-acetylglucosaminyltransferase subunit Y from Homo sapiens (Human).